Consider the following 227-residue polypeptide: Cytochrome c oxidase subunit 2 (227 aa).

Over 1-14 the chain is Mitochondrial intermembrane; the sequence is MAYPMQLGLQDATS. A helical transmembrane segment spans residues 15 to 45; that stretch reads PIMEELLHFHDHTLMIVFLISSLVLYIISLM. Residues 46–59 are Mitochondrial matrix-facing; it reads LTTKLTHTSTMDAQ. A helical transmembrane segment spans residues 60–87; it reads EVETIWTILPAIILIMIALPSLRILYMM. Topologically, residues 88-227 are mitochondrial intermembrane; it reads DEINNPSLTV…HFEKWSASML (140 aa). Positions 161, 196, 198, 200, 204, and 207 each coordinate Cu cation. Glu198 contributes to the Mg(2+) binding site.

Belongs to the cytochrome c oxidase subunit 2 family. In terms of assembly, component of the cytochrome c oxidase (complex IV, CIV), a multisubunit enzyme composed of 14 subunits. The complex is composed of a catalytic core of 3 subunits MT-CO1, MT-CO2 and MT-CO3, encoded in the mitochondrial DNA, and 11 supernumerary subunits COX4I, COX5A, COX5B, COX6A, COX6B, COX6C, COX7A, COX7B, COX7C, COX8 and NDUFA4, which are encoded in the nuclear genome. The complex exists as a monomer or a dimer and forms supercomplexes (SCs) in the inner mitochondrial membrane with NADH-ubiquinone oxidoreductase (complex I, CI) and ubiquinol-cytochrome c oxidoreductase (cytochrome b-c1 complex, complex III, CIII), resulting in different assemblies (supercomplex SCI(1)III(2)IV(1) and megacomplex MCI(2)III(2)IV(2)). Found in a complex with TMEM177, COA6, COX18, COX20, SCO1 and SCO2. Interacts with TMEM177 in a COX20-dependent manner. Interacts with COX20. Interacts with COX16. Cu cation is required as a cofactor.

The protein resides in the mitochondrion inner membrane. It catalyses the reaction 4 Fe(II)-[cytochrome c] + O2 + 8 H(+)(in) = 4 Fe(III)-[cytochrome c] + 2 H2O + 4 H(+)(out). In terms of biological role, component of the cytochrome c oxidase, the last enzyme in the mitochondrial electron transport chain which drives oxidative phosphorylation. The respiratory chain contains 3 multisubunit complexes succinate dehydrogenase (complex II, CII), ubiquinol-cytochrome c oxidoreductase (cytochrome b-c1 complex, complex III, CIII) and cytochrome c oxidase (complex IV, CIV), that cooperate to transfer electrons derived from NADH and succinate to molecular oxygen, creating an electrochemical gradient over the inner membrane that drives transmembrane transport and the ATP synthase. Cytochrome c oxidase is the component of the respiratory chain that catalyzes the reduction of oxygen to water. Electrons originating from reduced cytochrome c in the intermembrane space (IMS) are transferred via the dinuclear copper A center (CU(A)) of subunit 2 and heme A of subunit 1 to the active site in subunit 1, a binuclear center (BNC) formed by heme A3 and copper B (CU(B)). The BNC reduces molecular oxygen to 2 water molecules using 4 electrons from cytochrome c in the IMS and 4 protons from the mitochondrial matrix. The chain is Cytochrome c oxidase subunit 2 (MT-CO2) from Damaliscus pygargus phillipsi (Blesbok).